We begin with the raw amino-acid sequence, 413 residues long: Putative zinc finger protein B0310.2 (413 aa).

Disordered regions lie at residues 130–151 (PIFS…KRSL) and 259–290 (VESD…TGPM). Over residues 270–281 (PSPSTGDITENE) the composition is skewed to polar residues. 2 C2H2-type zinc fingers span residues 306-330 (FICM…MFIH) and 336-358 (HTCP…KKTH).

It localises to the nucleus. The sequence is that of Putative zinc finger protein B0310.2 from Caenorhabditis elegans.